The chain runs to 663 residues: Shugoshin 1 (663 aa).

2 coiled-coil regions span residues lysine 8–lysine 29 and aspartate 110–glutamate 132. Disordered regions lie at residues arginine 207–asparagine 250, glutamate 278–glycine 401, and phenylalanine 417–asparagine 478. 4 stretches are compositionally biased toward basic and acidic residues: residues arginine 231–glutamate 242, threonine 280–aspartate 304, lysine 339–arginine 358, and lysine 366–methionine 394. Positions asparagine 427 to glutamate 437 are enriched in low complexity. Over residues serine 443–lysine 453 the composition is skewed to basic and acidic residues.

It belongs to the shugoshin family. Binds microtubules. Ubiquitinated by the anaphase promoting complex (APC) at the onset of anaphase, conducting to its degradation.

Its subcellular location is the nucleus. The protein resides in the chromosome. It localises to the centromere. The protein localises to the kinetochore. It is found in the nucleus speckle. Its function is as follows. Plays a central role in chromosome cohesion during mitosis by preventing premature dissociation of cohesin complex from centromeres after prophase, when most of cohesin complex dissociates from chromosomes arms. May act by preventing phosphorylation of the stag2 subunit of cohesin complex at the centromere, ensuring cohesin persistence at centromere until cohesin cleavage by espl1/separase at anaphase. May regulate kinetochore microtubule stability in mitosis, possibly to sense tension on mitotic chromosomes. The polypeptide is Shugoshin 1 (Xenopus laevis (African clawed frog)).